The primary structure comprises 183 residues: Protein jagunal homolog 1 (183 aa).

At 1–39 the chain is on the cytoplasmic side; the sequence is MASRAGPRAAGTDGSDFQHRERVAMHYQMSVTLKYEIKK. Position 3 is a phosphoserine (S3). A helical transmembrane segment spans residues 40 to 60; the sequence is LIYVHLVIWLLLVAKMSVGHL. At 61–71 the chain is on the lumenal side; sequence RLLSHDQVAMP. Residues 72-92 form a helical membrane-spanning segment; that stretch reads YQWEYPYLLSVVPSLLGLLSF. At 93–96 the chain is on the cytoplasmic side; that stretch reads PRNN. Residues 97-117 form a helical membrane-spanning segment; the sequence is ISYLVLSMISMGLFSIAPLIY. Residues 118-137 lie on the Lumenal side of the membrane; that stretch reads GSMEMFPAAQQLYRHGKAYR. Residues 138–158 traverse the membrane as a helical segment; the sequence is FLFGFSAVSVMYLVLVLAVQV. The Cytoplasmic segment spans residues 159 to 183; it reads HAWQLYYSKKLLDSWFTSTQEKKRK.

Belongs to the jagunal family. In terms of assembly, interacts with COPA, COPB2 and COPG2.

The protein resides in the endoplasmic reticulum membrane. Endoplasmic reticulum transmembrane protein involved in vesicle-mediated transport, which is required for neutrophil function. Required for vesicle-mediated transport; it is however unclear whether it is involved in early secretory pathway or intracellular protein transport. Acts as a regulator of neutrophil function, probably via its role in vesicle-mediated transport: required for defense against fungal pathogens and for granulocyte colony-stimulating factor (GM-CSF) signaling pathway; possibly by regulating glycosylation and/or targeting of proteins contributing to the viability and migration of neutrophils. This is Protein jagunal homolog 1 (JAGN1) from Bos taurus (Bovine).